We begin with the raw amino-acid sequence, 219 residues long: Thymidylate kinase (219 aa).

Residue 9-16 participates in ATP binding; it reads GIEGCGKT.

The protein belongs to the thymidylate kinase family.

The catalysed reaction is dTMP + ATP = dTDP + ADP. Phosphorylation of dTMP to form dTDP in both de novo and salvage pathways of dTTP synthesis. This is Thymidylate kinase from Syntrophus aciditrophicus (strain SB).